A 771-amino-acid chain; its full sequence is Leucine-rich repeat and fibronectin type III domain-containing protein 1 (771 aa).

Positions Met1–Gly31 are cleaved as a signal peptide. The region spanning Gln32–Arg65 is the LRRNT domain. Residues Gln32–Met536 lie on the Extracellular side of the membrane. 7 LRR repeats span residues Arg66–Asn87, Ser90–Asp111, Ala114–Gly135, Asn138–Ala159, Thr163–Gln184, Asn187–Gln208, and Lys211–Leu232. A glycan (N-linked (GlcNAc...) asparagine) is linked at Asn87. Residues Asn252–Pro298 enclose the LRRCT domain. The Ig-like domain occupies Pro299 to Cys386. A disulfide bond links Cys321 and Cys370. N-linked (GlcNAc...) asparagine glycosylation occurs at Asn343. A disordered region spans residues Pro397–Ser422. Positions Ala424–Asp520 constitute a Fibronectin type-III domain. Residues Ile537 to Ile557 traverse the membrane as a helical segment. The Cytoplasmic portion of the chain corresponds to Arg558–Val771. Ser613 and Ser718 each carry phosphoserine. The disordered stretch occupies residues Pro654 to Ala743. Over residues Tyr719 to Thr732 the composition is skewed to basic residues. Residues Glu768–Val771 carry the PDZ-binding motif.

Belongs to the LRFN family. Can form heteromeric complexes with LRFN2, LRFN3, LRFN4 and LRFN5. Forms homomeric complexes, but not across cell junctions. Interacts with DLG1, DLG2, DLG3 and DLG4. Interacts with 2 AMPA receptor subunits GRIA1 and GRIA2 and NMDA receptor subunit GRIN1. In terms of processing, glycosylated.

It localises to the membrane. It is found in the synapse. The protein localises to the postsynaptic density membrane. In terms of biological role, promotes neurite outgrowth in hippocampal neurons. Involved in the regulation and maintenance of excitatory synapses. Induces the clustering of excitatory postsynaptic proteins, including DLG4, DLGAP1, GRIA1 and GRIN1. The protein is Leucine-rich repeat and fibronectin type III domain-containing protein 1 (LRFN1) of Homo sapiens (Human).